We begin with the raw amino-acid sequence, 159 residues long: Large ribosomal subunit protein uL15 (159 aa).

A compositionally biased stretch (basic and acidic residues) spans 1-13 (MRIHEVTPKEGST). A disordered region spans residues 1–51 (MRIHEVTPKEGSTKRRRRVGRGISAGQGASCGFGMRGQKSRSGTGTKAGFE). Gly residues predominate over residues 23-35 (ISAGQGASCGFGM).

Belongs to the universal ribosomal protein uL15 family. In terms of assembly, part of the 50S ribosomal subunit.

In terms of biological role, binds to the 23S rRNA. The polypeptide is Large ribosomal subunit protein uL15 (Rippkaea orientalis (strain PCC 8801 / RF-1) (Cyanothece sp. (strain PCC 8801))).